A 371-amino-acid chain; its full sequence is Maltose/maltodextrin import ATP-binding protein MalK (371 aa).

In terms of domain architecture, ABC transporter spans 4-234 (VQLQNVTKAW…PADRFVAGFI (231 aa)). 36–43 (GPSGCGKS) contacts ATP.

It belongs to the ABC transporter superfamily. Maltooligosaccharide importer (TC 3.A.1.1.1) family. As to quaternary structure, the complex is composed of two ATP-binding proteins (MalK), two transmembrane proteins (MalG and MalK) and a solute-binding protein (MalE).

The protein localises to the cell inner membrane. It catalyses the reaction D-maltose(out) + ATP + H2O = D-maltose(in) + ADP + phosphate + H(+). Part of the ABC transporter complex MalEFGK involved in maltose/maltodextrin import. Responsible for energy coupling to the transport system. In Escherichia coli O157:H7, this protein is Maltose/maltodextrin import ATP-binding protein MalK.